The chain runs to 633 residues: Phospholipid--sterol O-acyltransferase (633 aa).

Residues 1–6 lie on the Cytoplasmic side of the membrane; the sequence is MGANSK. A helical; Signal-anchor for type II membrane protein membrane pass occupies residues 7–29; that stretch reads SVTASFTVIAVFFLICGGRTAVE. Residues 30 to 633 lie on the Lumenal side of the membrane; sequence DETEFHGDYS…TSANMLLQYI (604 aa). S195 serves as the catalytic Acyl-ester intermediate. Active-site charge relay system residues include D461 and H505.

This sequence belongs to the AB hydrolase superfamily. Lipase family.

It localises to the microsome membrane. Involved in lipid catabolism. Essential for sterol esters biosynthesis in leaves and seeds, but not in flowers. Plays a role in controlling the free sterol content of leaves. Catalyzes the transacylation of acyl groups from phospholipids to a variety of different sterols. Prefers phosphatidylethanolamine over phosphatidylcholine as an acyl donor. Not active toward neutral lipids. Highly specific for position sn-2, which in plant lipids is essentially devoid of saturated acyl groups. Broad sterol specificity (cholesterol &gt; campesterol &gt; sitosterol &gt; stigmasterol), but no activity with lupeol or beta-amyrin. The protein is Phospholipid--sterol O-acyltransferase (PSAT) of Arabidopsis thaliana (Mouse-ear cress).